A 388-amino-acid chain; its full sequence is Alanine racemase 1 (388 aa).

The Proton acceptor; specific for D-alanine role is filled by K40. At K40 the chain carries N6-(pyridoxal phosphate)lysine. R138 provides a ligand contact to substrate. Y268 acts as the Proton acceptor; specific for L-alanine in catalysis. M316 contributes to the substrate binding site.

The protein belongs to the alanine racemase family. It depends on pyridoxal 5'-phosphate as a cofactor.

The catalysed reaction is L-alanine = D-alanine. Its pathway is amino-acid biosynthesis; D-alanine biosynthesis; D-alanine from L-alanine: step 1/1. Its function is as follows. Catalyzes the interconversion of L-alanine and D-alanine. May also act on other amino acids. This chain is Alanine racemase 1 (alr1), found in Caldanaerobacter subterraneus subsp. tengcongensis (strain DSM 15242 / JCM 11007 / NBRC 100824 / MB4) (Thermoanaerobacter tengcongensis).